A 141-amino-acid polypeptide reads, in one-letter code: Hemoglobin subunit alpha-D (141 aa).

The 141-residue stretch at methionine 1–arginine 141 folds into the Globin domain. Residues histidine 58 and histidine 87 each coordinate heme b.

The protein belongs to the globin family. Heterotetramer of two alpha-D chains and two beta chains. Red blood cells.

Its function is as follows. Involved in oxygen transport from the lung to the various peripheral tissues. The polypeptide is Hemoglobin subunit alpha-D (HBAD) (Rhea americana (Greater rhea)).